We begin with the raw amino-acid sequence, 227 residues long: E3 ubiquitin-protein ligase ZNRF1 (227 aa).

A disordered region spans residues Met1 to Gly42. The N-myristoyl glycine moiety is linked to residue Gly2. Residues Gly2–Arg10 are required for endosomal and lysosomal localization and myristoylation. A phosphoserine mark is found at Ser50, Ser52, and Ser53. The tract at residues Pro68 to Glu105 is disordered. The residue at position 103 (Tyr103) is a Phosphotyrosine; by SRC. Ser123 carries the phosphoserine modification. The RING-type; atypical zinc finger occupies Cys184–Pro225.

As to quaternary structure, interacts with AKT1, GLUL and TUBB2A. Interacts with ZNRF2. Interacts (via its RING domain) with UBE2N. Interacts (when phosphorylated) with YWHAE. Post-translationally, N-myristoylation targets ZNRF1 to intracellular membranes. In terms of processing, phosphorylated by SRC at Tyr-103; leading to 'Lys-63'-linked ubiquitination of TLR3, lysosomal trafficking and degradation. As to expression, expressed primarily in the nervous system, with expression higher in developing brain relative to adult. Expressed at low levels in testis and thymus.

Its subcellular location is the endosome. It is found in the lysosome. The protein resides in the membrane. The protein localises to the cytoplasmic vesicle. It localises to the secretory vesicle. Its subcellular location is the synaptic vesicle membrane. It catalyses the reaction S-ubiquitinyl-[E2 ubiquitin-conjugating enzyme]-L-cysteine + [acceptor protein]-L-lysine = [E2 ubiquitin-conjugating enzyme]-L-cysteine + N(6)-ubiquitinyl-[acceptor protein]-L-lysine.. Its pathway is protein modification; protein ubiquitination. Functionally, E3 ubiquitin-protein ligase that plays a role in different processes including cell differentiation, receptor recycling or regulation of inflammation. Mediates the ubiquitination of AKT1 and GLUL, thereby playing a role in neuron cells differentiation. Plays a role in the establishment and maintenance of neuronal transmission and plasticity. Regulates Schwann cells differentiation by mediating ubiquitination of GLUL. Promotes neurodegeneration by mediating 'Lys-48'-linked polyubiquitination and subsequent degradation of AKT1 in axons: degradation of AKT1 prevents AKT1-mediated phosphorylation of GSK3B, leading to GSK3B activation and phosphorylation of DPYSL2/CRMP2 followed by destabilization of microtubule assembly in axons. Ubiquitinates the Na(+)/K(+) ATPase alpha-1 subunit/ATP1A1 and thereby influences its endocytosis and/or degradation. Controls ligand-induced EGFR signaling via mediating receptor ubiquitination and recruitment of the ESCRT machinery. Acts as a negative feedback mechanism controlling TLR3 trafficking by mediating TLR3 'Lys-63'-linked polyubiquitination to reduce type I IFN production. Modulates inflammation by promoting caveolin-1/CAV1 ubiquitination and degradation to regulate TLR4-activated immune response. This Homo sapiens (Human) protein is E3 ubiquitin-protein ligase ZNRF1 (ZNRF1).